We begin with the raw amino-acid sequence, 163 residues long: Lipoprotein signal peptidase (163 aa).

Helical transmembrane passes span 11-31 (ILIA…IATT), 63-83 (KMTF…YFFI), and 88-108 (YNLF…GNFI). Catalysis depends on residues Asp-118 and Asp-136. A helical membrane pass occupies residues 131 to 151 (IFNIADSSLTIGVILIIIALL).

The protein belongs to the peptidase A8 family.

The protein resides in the cell membrane. The enzyme catalyses Release of signal peptides from bacterial membrane prolipoproteins. Hydrolyzes -Xaa-Yaa-Zaa-|-(S,diacylglyceryl)Cys-, in which Xaa is hydrophobic (preferably Leu), and Yaa (Ala or Ser) and Zaa (Gly or Ala) have small, neutral side chains.. The protein operates within protein modification; lipoprotein biosynthesis (signal peptide cleavage). This protein specifically catalyzes the removal of signal peptides from prolipoproteins. The protein is Lipoprotein signal peptidase of Staphylococcus aureus (strain Mu3 / ATCC 700698).